The chain runs to 135 residues: ATP synthase epsilon chain (135 aa).

It belongs to the ATPase epsilon chain family. In terms of assembly, F-type ATPases have 2 components, CF(1) - the catalytic core - and CF(0) - the membrane proton channel. CF(1) has five subunits: alpha(3), beta(3), gamma(1), delta(1), epsilon(1). CF(0) has three main subunits: a, b and c.

Its subcellular location is the cell inner membrane. In terms of biological role, produces ATP from ADP in the presence of a proton gradient across the membrane. The protein is ATP synthase epsilon chain of Brucella abortus (strain S19).